Reading from the N-terminus, the 162-residue chain is Cyclic pyranopterin monophosphate synthase (162 aa).

Substrate-binding positions include 79-81 (LCH) and 117-118 (ME). D132 is a catalytic residue.

It belongs to the MoaC family. In terms of assembly, homohexamer; trimer of dimers.

It carries out the reaction (8S)-3',8-cyclo-7,8-dihydroguanosine 5'-triphosphate = cyclic pyranopterin phosphate + diphosphate. The protein operates within cofactor biosynthesis; molybdopterin biosynthesis. Functionally, catalyzes the conversion of (8S)-3',8-cyclo-7,8-dihydroguanosine 5'-triphosphate to cyclic pyranopterin monophosphate (cPMP). The chain is Cyclic pyranopterin monophosphate synthase from Bordetella petrii (strain ATCC BAA-461 / DSM 12804 / CCUG 43448).